Consider the following 196-residue polypeptide: Late protein I196L (196 aa).

2 repeat units span residues 28–48 (SNYL…PTTS) and 49–70 (SNYL…TTTS). A 3; approximate repeat occupies 71 to 92 (SNYLTSAIPNIISDKEDDTPFS).

Belongs to the asfivirus I196L family.

In African swine fever virus (strain Badajoz 1971 Vero-adapted) (Ba71V), this protein is Late protein I196L.